We begin with the raw amino-acid sequence, 254 residues long: Protein CbbY, plasmid (254 aa).

Belongs to the HAD-like hydrolase superfamily. CbbY/CbbZ/Gph/YieH family.

The chain is Protein CbbY, plasmid (cbbYP) from Cupriavidus necator (strain ATCC 17699 / DSM 428 / KCTC 22496 / NCIMB 10442 / H16 / Stanier 337) (Ralstonia eutropha).